Reading from the N-terminus, the 363-residue chain is Adenylate cyclase 2 (363 aa).

The Guanylate cyclase domain occupies 157 to 286 (VFLFIDLAGS…DTVNTTARLE (130 aa)). The Mg(2+) site is built by D162 and D206. The segment at 341–363 (GDGATEPAGETVRSPAAEAFTSL) is disordered.

This sequence belongs to the adenylyl cyclase class-3 family. Mg(2+) is required as a cofactor.

The catalysed reaction is ATP = 3',5'-cyclic AMP + diphosphate. Functionally, plays essential roles in regulation of cellular metabolism by catalyzing the synthesis of a second messenger, cAMP. The chain is Adenylate cyclase 2 (cya2) from Rhizobium meliloti (strain 1021) (Ensifer meliloti).